We begin with the raw amino-acid sequence, 250 residues long: Pyrroloquinoline-quinone synthase (250 aa).

Belongs to the PqqC family.

It catalyses the reaction 6-(2-amino-2-carboxyethyl)-7,8-dioxo-1,2,3,4,7,8-hexahydroquinoline-2,4-dicarboxylate + 3 O2 = pyrroloquinoline quinone + 2 H2O2 + 2 H2O + H(+). It functions in the pathway cofactor biosynthesis; pyrroloquinoline quinone biosynthesis. Ring cyclization and eight-electron oxidation of 3a-(2-amino-2-carboxyethyl)-4,5-dioxo-4,5,6,7,8,9-hexahydroquinoline-7,9-dicarboxylic-acid to PQQ. The chain is Pyrroloquinoline-quinone synthase from Ectopseudomonas mendocina (strain ymp) (Pseudomonas mendocina).